The following is a 284-amino-acid chain: Peflin (284 aa).

The interval 1 to 111 (MASYPYRQGC…QPGLYGQGGA (111 aa)) is disordered. Positions 8-26 (QGCPGAAGQAPGAPPGSYY) are enriched in low complexity. Repeat copies occupy residues 21–29 (PPGSYYPGP), 31–39 (NSGGQYGSG), 41–49 (PPGGGYGGP), 50–58 (APGGPYGPP), 59–67 (AGGGPYGHP), 76–84 (TPGGPYGGA), 85–92 (APGGPYGQ), 93–100 (PPPSSYGA), and 101–109 (QQPGLYGQG). Positions 21–109 (PPGSYYPGPP…AQQPGLYGQG (89 aa)) are 9 X 9 AA approximate tandem repeat of [AP]-P-G-G-P-Y-G-G-P-P. A compositionally biased stretch (gly residues) spans 34-50 (GQYGSGLPPGGGYGGPA). The span at 65-75 (GHPNPGMFPSG) shows a compositional bias: low complexity. Positions 76-90 (TPGGPYGGAAPGGPY) are enriched in gly residues. 5 EF-hand domains span residues 114-149 (NVDPEAYSWFQSVDSDHSGYISMKELKQALVNCNWS), 155-183 (TCLMMINMFDKTKSGRIDVYGFSALWKFI), 181-216 (KFIQQWKNLFQQYDRDRSGSISYTELQQALSQMGYN), 217-253 (LSPQFTQLLVSRYCPRSANPAMQLDRFIQVCTQLQVL), and 254-283 (TEAFREKDTAVQGNIRLSFEDFVTMTASRM). Positions 127, 129, 131, and 133 each coordinate Ca(2+). Lys137 is covalently cross-linked (Glycyl lysine isopeptide (Lys-Gly) (interchain with G-Cter in ubiquitin)). Glu138 lines the Ca(2+) pocket. Ca(2+) is bound by residues Asp194, Asp196, Ser198, Ser200, and Glu205. The segment at 204 to 284 (TELQQALSQM…FVTMTASRML (81 aa)) is required for interaction with PDCD6.

As to quaternary structure, heterodimer; heterodimerizes (via the EF-hand 5) with PDCD6. Dissociates from PDCD6 in presence of calcium. Post-translationally, ubiquitinated by the BCR(KLHL12) E3 ubiquitin ligase complex.

It localises to the cytoplasm. The protein resides in the endoplasmic reticulum. It is found in the membrane. Its subcellular location is the cytoplasmic vesicle. The protein localises to the COPII-coated vesicle membrane. In terms of biological role, calcium-binding protein that acts as an adapter that bridges unrelated proteins or stabilizes weak protein-protein complexes in response to calcium. Together with PDCD6, acts as a calcium-dependent adapter for the BCR(KLHL12) complex, a complex involved in endoplasmic reticulum (ER)-Golgi transport by regulating the size of COPII coats. In response to cytosolic calcium increase, the heterodimer formed with PDCD6 interacts with, and bridges together the BCR(KLHL12) complex and SEC31 (SEC31A or SEC31B), promoting monoubiquitination of SEC31 and subsequent collagen export, which is required for neural crest specification. Its role in the heterodimer formed with PDCD6 is however unclear: some evidence shows that PEF1 and PDCD6 work together and promote association between PDCD6 and SEC31 in presence of calcium. Other reports show that PEF1 dissociates from PDCD6 in presence of calcium, and may act as a negative regulator of PDCD6. Also acts as a negative regulator of ER-Golgi transport; possibly by inhibiting interaction between PDCD6 and SEC31. In Homo sapiens (Human), this protein is Peflin.